The primary structure comprises 433 residues: Probable glycine dehydrogenase (decarboxylating) subunit 1 (433 aa).

Belongs to the GcvP family. N-terminal subunit subfamily. As to quaternary structure, the glycine cleavage system is composed of four proteins: P, T, L and H. In this organism, the P 'protein' is a heterodimer of two subunits.

The enzyme catalyses N(6)-[(R)-lipoyl]-L-lysyl-[glycine-cleavage complex H protein] + glycine + H(+) = N(6)-[(R)-S(8)-aminomethyldihydrolipoyl]-L-lysyl-[glycine-cleavage complex H protein] + CO2. Functionally, the glycine cleavage system catalyzes the degradation of glycine. The P protein binds the alpha-amino group of glycine through its pyridoxal phosphate cofactor; CO(2) is released and the remaining methylamine moiety is then transferred to the lipoamide cofactor of the H protein. In Thermoplasma acidophilum (strain ATCC 25905 / DSM 1728 / JCM 9062 / NBRC 15155 / AMRC-C165), this protein is Probable glycine dehydrogenase (decarboxylating) subunit 1.